The primary structure comprises 430 residues: Enolase (430 aa).

Residue glutamine 163 participates in (2R)-2-phosphoglycerate binding. The active-site Proton donor is glutamate 205. Mg(2+) is bound by residues aspartate 242, glutamate 286, and aspartate 313. Residues lysine 338, arginine 367, serine 368, and lysine 389 each contribute to the (2R)-2-phosphoglycerate site. The active-site Proton acceptor is the lysine 338.

This sequence belongs to the enolase family. Requires Mg(2+) as cofactor.

It is found in the cytoplasm. Its subcellular location is the secreted. It localises to the cell surface. It carries out the reaction (2R)-2-phosphoglycerate = phosphoenolpyruvate + H2O. Its pathway is carbohydrate degradation; glycolysis; pyruvate from D-glyceraldehyde 3-phosphate: step 4/5. Its function is as follows. Catalyzes the reversible conversion of 2-phosphoglycerate (2-PG) into phosphoenolpyruvate (PEP). It is essential for the degradation of carbohydrates via glycolysis. This is Enolase from Symbiobacterium thermophilum (strain DSM 24528 / JCM 14929 / IAM 14863 / T).